Here is a 153-residue protein sequence, read N- to C-terminus: Arginine repressor (153 aa).

It belongs to the ArgR family.

The protein resides in the cytoplasm. It functions in the pathway amino-acid biosynthesis; L-arginine biosynthesis [regulation]. Regulates arginine biosynthesis genes. The polypeptide is Arginine repressor (Syntrophomonas wolfei subsp. wolfei (strain DSM 2245B / Goettingen)).